A 626-amino-acid chain; its full sequence is ATP-dependent zinc metalloprotease FtsH (626 aa).

Topologically, residues 1–7 (MNGNRPN) are cytoplasmic. A helical transmembrane segment spans residues 8-28 (YISLIFAALVILSLFWLVRSF). The Periplasmic segment spans residues 29–108 (YFDTSAPSKM…VTGEKGVSSS (80 aa)). Residues 109–129 (FWVNVIGNVIFIGFLLFMFFF) traverse the membrane as a helical segment. Residues 130-626 (MMRTISGRNN…RAAAGSEQDS (497 aa)) lie on the Cytoplasmic side of the membrane. Residue 202–209 (GPPGTGKT) coordinates ATP. His-424 provides a ligand contact to Zn(2+). Glu-425 is an active-site residue. His-428 and Asp-501 together coordinate Zn(2+).

This sequence in the central section; belongs to the AAA ATPase family. The protein in the C-terminal section; belongs to the peptidase M41 family. Homohexamer. Zn(2+) serves as cofactor.

It localises to the cell inner membrane. In terms of biological role, acts as a processive, ATP-dependent zinc metallopeptidase for both cytoplasmic and membrane proteins. Plays a role in the quality control of integral membrane proteins. The sequence is that of ATP-dependent zinc metalloprotease FtsH from Pseudothermotoga lettingae (strain ATCC BAA-301 / DSM 14385 / NBRC 107922 / TMO) (Thermotoga lettingae).